An 85-amino-acid polypeptide reads, in one-letter code: UPF0473 protein CPR_1590 (85 aa).

Belongs to the UPF0473 family.

This Clostridium perfringens (strain SM101 / Type A) protein is UPF0473 protein CPR_1590.